Consider the following 373-residue polypeptide: Leucine aminopeptidase 1 (373 aa).

The N-terminal stretch at 1–18 (MKLLSVLALSATATSVLG) is a signal peptide. Zn(2+) is bound by residues His176 and Asp195. N-linked (GlcNAc...) asparagine glycosylation is present at Asn196. The Zn(2+) site is built by Glu234 and Asp261. An N-linked (GlcNAc...) asparagine glycan is attached at Asn288. Cys310 and Cys314 are disulfide-bonded. A Zn(2+)-binding site is contributed by His343. N-linked (GlcNAc...) asparagine glycosylation is present at Asn348.

The protein belongs to the peptidase M28 family. M28E subfamily. Monomer. Zn(2+) is required as a cofactor.

It localises to the secreted. Activity is inhibited by EDTA, o-phenanthroline, bestatin and amastatin. Extracellular aminopeptidase which contributes to pathogenicity. This Trichophyton rubrum (Athlete's foot fungus) protein is Leucine aminopeptidase 1 (LAP1).